Here is a 967-residue protein sequence, read N- to C-terminus: MAALGPKMERLSSIDAQLRMLVPGKVSEDDKLIEYDALLLDRFLDILQDLHGDDLKEMVQECYEVAAEYETKHDLQKLDELGKMITSLDPGDSIVIAKSLSHMLNLANLAEEVQIAYRRRIKLKKGDFADENSAITESDIEETLKRLVVDLKKSPAEVFDALKSQTVDLVLTAHPTQSVRRSLLQKHSRIRNCLVQLYSKDITPDDKQELDEALQREIQAAFRTDEIRRTQPTPQDEMRAGMSYFHETIWKGVPKFLRRVDTALKNIGINERVPYNAPLIQFSSWMGGDRDGNPRVTPEVTRDVCLLARMMASNLYCSQIEDLMFELSMWRCSDELRMRADVLHLSTKKDAKHYIEFWKKVPPNEPYRVILSDVRDKLYNTRERSRELLSSGHSDIPEEATLTNVEQLLEPLELCYRSLCACGDSVIADGTLLDFLRQVSTFGLSLVRLDIRQESDRHTDVLDAITTYLGIGSYREWTEERRQEWLLSELNGKRPLFGSDLPKTEEISDVLDTFHVIAELPSDNFGAYIISMATAPSDVLAVELLQRECHVKTPLRVVPLFEKLADLEAAPAALARLFSIDWYRQRINGKQEVMIGYSDSGKDAGRLSAAWQLYKAQEELIKVAKDFGVKLTMFHGRGGTVGRGGGPTHLAILSQPPDTIHGSLRVTVQGEVIEQSFGEEHLCFRTLQRFTAATLEHGMHPPNAPKPEWRALLDEMAVVATEEYRSIVFKEPRFVEYFRLATPETEYGRMNIGSRPSKRKPSGGIDSLRAIPWIFAWTQTRFHLPVWLGFGAAFKNVLQKDIRNLHMLQEMYNEWPFFRVTIDLVEMVFAKGNPGIAALYDKLLVSEELHPLGEKLRANYEETQKLLLQVAGHRDLLEGDLYLKQRLRLRDAYITTLNVCQAYTLKRIRDPDYHVALRPHLSKEIMDSTKAAADVVKLNPGSEYAPGLEDTLILTMKGIAAGLQNTG.

Phosphoserine is present on Ser13. Catalysis depends on residues His174 and Lys602.

Belongs to the PEPCase type 1 family. In terms of assembly, homotetramer. Requires Mg(2+) as cofactor.

It is found in the cytoplasm. It catalyses the reaction oxaloacetate + phosphate = phosphoenolpyruvate + hydrogencarbonate. It participates in photosynthesis; C3 acid pathway. With respect to regulation, by light-reversible phosphorylation. In terms of biological role, through the carboxylation of phosphoenolpyruvate (PEP) it forms oxaloacetate, a four-carbon dicarboxylic acid source for the tricarboxylic acid cycle. The protein is Phosphoenolpyruvate carboxylase 2 (PEP4) of Zea mays (Maize).